A 186-amino-acid chain; its full sequence is ATP synthase subunit delta (186 aa).

This sequence belongs to the ATPase delta chain family. As to quaternary structure, F-type ATPases have 2 components, F(1) - the catalytic core - and F(0) - the membrane proton channel. F(1) has five subunits: alpha(3), beta(3), gamma(1), delta(1), epsilon(1). F(0) has three main subunits: a(1), b(2) and c(10-14). The alpha and beta chains form an alternating ring which encloses part of the gamma chain. F(1) is attached to F(0) by a central stalk formed by the gamma and epsilon chains, while a peripheral stalk is formed by the delta and b chains.

It localises to the cell inner membrane. In terms of biological role, f(1)F(0) ATP synthase produces ATP from ADP in the presence of a proton or sodium gradient. F-type ATPases consist of two structural domains, F(1) containing the extramembraneous catalytic core and F(0) containing the membrane proton channel, linked together by a central stalk and a peripheral stalk. During catalysis, ATP synthesis in the catalytic domain of F(1) is coupled via a rotary mechanism of the central stalk subunits to proton translocation. Its function is as follows. This protein is part of the stalk that links CF(0) to CF(1). It either transmits conformational changes from CF(0) to CF(1) or is implicated in proton conduction. This Wolbachia sp. subsp. Drosophila simulans (strain wRi) protein is ATP synthase subunit delta.